The chain runs to 91 residues: Cytochrome b-c1 complex subunit 10, mitochondrial (91 aa).

Topologically, residues 1–34 (MFATSILRSAYPAYKSPYGPKYQYQPHIDGITPK) are mitochondrial matrix. The helical transmembrane segment at 35-58 (QLVRILPTAAAWTGVALFAVVYYA) threads the bilayer. Residues 59–91 (SGIPRLRRDVLQRIPYLGERYFVNEIPASDNPF) are Mitochondrial intermembrane-facing.

It belongs to the UQCR11/QCR10 family. Component of the ubiquinol-cytochrome c oxidoreductase (cytochrome b-c1 complex, complex III, CIII), a multisubunit enzyme composed of 10 subunits. The complex is composed of 3 respiratory subunits cytochrome b (cob), cytochrome c1 (cyt-1) and Rieske protein (fes-1), 2 core protein subunits pep and ucr-1, and 5 low-molecular weight protein subunits qcr6, qcr7, qcr8, qcr9 and probably NCU16844/qcr10. The complex exists as an obligatory dimer and forms supercomplexes (SCs) in the inner mitochondrial membrane with NADH-ubiquinone oxidoreductase (complex I, CI) and cytochrome c oxidase (complex IV, CIV), resulting in different assemblies (supercomplexes SCI(1)III(2), SCIII(2)IV(1) and SCIII(2)IV(2) as well as higher order I(x)III(y)IV(z) megacomplexes).

The protein localises to the mitochondrion inner membrane. In terms of biological role, component of the ubiquinol-cytochrome c oxidoreductase, a multisubunit transmembrane complex that is part of the mitochondrial electron transport chain which drives oxidative phosphorylation. The respiratory chain contains 3 multisubunit complexes succinate dehydrogenase (complex II, CII), ubiquinol-cytochrome c oxidoreductase (cytochrome b-c1 complex, complex III, CIII) and cytochrome c oxidase (complex IV, CIV), that cooperate to transfer electrons derived from NADH and succinate to molecular oxygen, creating an electrochemical gradient over the inner membrane that drives transmembrane transport and the ATP synthase. The cytochrome b-c1 complex catalyzes electron transfer from ubiquinol to cytochrome c, linking this redox reaction to translocation of protons across the mitochondrial inner membrane, with protons being carried across the membrane as hydrogens on the quinol. In the process called Q cycle, 2 protons are consumed from the matrix, 4 protons are released into the intermembrane space and 2 electrons are passed to cytochrome c. In Neurospora crassa (strain ATCC 24698 / 74-OR23-1A / CBS 708.71 / DSM 1257 / FGSC 987), this protein is Cytochrome b-c1 complex subunit 10, mitochondrial.